We begin with the raw amino-acid sequence, 292 residues long: 4-hydroxy-tetrahydrodipicolinate synthase (292 aa).

T45 lines the pyruvate pocket. Y133 serves as the catalytic Proton donor/acceptor. K161 serves as the catalytic Schiff-base intermediate with substrate. Pyruvate is bound at residue I203.

It belongs to the DapA family. In terms of assembly, homotetramer; dimer of dimers.

The protein resides in the cytoplasm. The enzyme catalyses L-aspartate 4-semialdehyde + pyruvate = (2S,4S)-4-hydroxy-2,3,4,5-tetrahydrodipicolinate + H2O + H(+). It functions in the pathway amino-acid biosynthesis; L-lysine biosynthesis via DAP pathway; (S)-tetrahydrodipicolinate from L-aspartate: step 3/4. In terms of biological role, catalyzes the condensation of (S)-aspartate-beta-semialdehyde [(S)-ASA] and pyruvate to 4-hydroxy-tetrahydrodipicolinate (HTPA). The protein is 4-hydroxy-tetrahydrodipicolinate synthase of Salmonella arizonae (strain ATCC BAA-731 / CDC346-86 / RSK2980).